Here is a 209-residue protein sequence, read N- to C-terminus: Thymidylate kinase (209 aa).

Position 7 to 14 (7 to 14 (GIDGAGKS)) interacts with ATP.

The protein belongs to the thymidylate kinase family.

It carries out the reaction dTMP + ATP = dTDP + ADP. Phosphorylation of dTMP to form dTDP in both de novo and salvage pathways of dTTP synthesis. The polypeptide is Thymidylate kinase (Mycoplasma mobile (strain ATCC 43663 / 163K / NCTC 11711) (Mesomycoplasma mobile)).